The primary structure comprises 377 residues: Guanine nucleotide-binding protein subunit alpha-13 (377 aa).

S-palmitoyl cysteine attachment occurs at residues cysteine 14 and cysteine 18. A G-alpha domain is found at 47–377; it reads RLVKILLLGA…HDNLKQLMLQ (331 aa). The interval 50–63 is G1 motif; sequence KILLLGAGESGKST. GTP-binding positions include 58–63, serine 173, and 197–200; these read ESGKST and LLAR. Serine 62 lines the Mg(2+) pocket. The G2 motif stretch occupies residues 195–203; that stretch reads DILLARRPT. Position 203 (threonine 203) interacts with Mg(2+). Threonine 203 carries the phosphothreonine; by PKA modification. Positions 218-227 are G3 motif; sequence FKMVDVGGQR. A G4 motif region spans residues 287–294; that stretch reads ILFLNKTD. GTP-binding positions include 291 to 294 and alanine 349; that span reads NKTD. Residues 347 to 352 form a G5 motif region; that stretch reads TTAINT.

The protein belongs to the G-alpha family. G(12) subfamily. As to quaternary structure, g proteins are composed of 3 units; alpha, beta and gamma. The alpha chain contains the guanine nucleotide binding site. Interacts with UBXD5. Interacts with HAX1. Interacts (in GTP-bound form) with PPP5C (via TPR repeats); activates PPP5C phosphatase activity and translocates PPP5C to the cell membrane. Interacts with RGS22. Interacts (in GTP-bound form) with ARHGEF1. Interacts (in GTP-bound form) with ARHGEF11 (via RGS domain). Interacts (in GTP-bound form) with ARHGEF12 (via RGS domain). Interacts with CTNND1. Interacts with GASL2L2. Interacts with GPR35. Interacts with GPR174. Post-translationally, palmitoylation is critical for proper membrane localization and signaling. Phosphorylation on Thr-203 by PKA destabilizes the heterotrimer of alpha, beta and gamma, and inhibits Rho activation. In terms of tissue distribution, expressed in testis, including in Leydig cells and in the seminiferous epithelium, in differentiating cells from the spermatogonia to mature spermatozoa stages and round spermatids (at protein level). Expressed in 99.2% of spermatozoa from healthy individuals, but only in 28.6% of macrocephalic spermatozoa from infertile patients (at protein level).

The protein localises to the cell membrane. Its subcellular location is the melanosome. The protein resides in the cytoplasm. It localises to the nucleus. In terms of biological role, guanine nucleotide-binding proteins (G proteins) are involved as modulators or transducers in various transmembrane signaling systems. Activates effector molecule RhoA by binding and activating RhoGEFs (ARHGEF1/p115RhoGEF, ARHGEF11/PDZ-RhoGEF and ARHGEF12/LARG). GNA13-dependent Rho signaling subsequently regulates transcription factor AP-1 (activating protein-1). Promotes tumor cell invasion and metastasis by activating RhoA/ROCK signaling pathway. Inhibits CDH1-mediated cell adhesion in a process independent from Rho activation. In lymphoid follicles, transmits P2RY8- and S1PR2-dependent signals that lead to inhibition of germinal center (GC) B cell growth and migration outside the GC niche. The polypeptide is Guanine nucleotide-binding protein subunit alpha-13 (GNA13) (Homo sapiens (Human)).